Reading from the N-terminus, the 160-residue chain is Crossover junction endodeoxyribonuclease RuvC (160 aa).

Catalysis depends on residues Asp-7, Glu-70, and Asp-142. Mg(2+) is bound by residues Asp-7, Glu-70, and Asp-142.

The protein belongs to the RuvC family. In terms of assembly, homodimer which binds Holliday junction (HJ) DNA. The HJ becomes 2-fold symmetrical on binding to RuvC with unstacked arms; it has a different conformation from HJ DNA in complex with RuvA. In the full resolvosome a probable DNA-RuvA(4)-RuvB(12)-RuvC(2) complex forms which resolves the HJ. Requires Mg(2+) as cofactor.

It is found in the cytoplasm. The enzyme catalyses Endonucleolytic cleavage at a junction such as a reciprocal single-stranded crossover between two homologous DNA duplexes (Holliday junction).. In terms of biological role, the RuvA-RuvB-RuvC complex processes Holliday junction (HJ) DNA during genetic recombination and DNA repair. Endonuclease that resolves HJ intermediates. Cleaves cruciform DNA by making single-stranded nicks across the HJ at symmetrical positions within the homologous arms, yielding a 5'-phosphate and a 3'-hydroxyl group; requires a central core of homology in the junction. The consensus cleavage sequence is 5'-(A/T)TT(C/G)-3'. Cleavage occurs on the 3'-side of the TT dinucleotide at the point of strand exchange. HJ branch migration catalyzed by RuvA-RuvB allows RuvC to scan DNA until it finds its consensus sequence, where it cleaves and resolves the cruciform DNA. The chain is Crossover junction endodeoxyribonuclease RuvC from Ehrlichia ruminantium (strain Gardel).